The primary structure comprises 317 residues: Small ribosomal subunit protein uS2 (317 aa).

S2 is subject to N-acetylserine. Laminin-binding stretches follow at residues I161–R180 and R205–G229. [DE]-W-[ST] repeat units follow at residues E230–T232 and D245–S247. Residues E242 to S317 are laminin-binding. Over residues E271 to G284 the composition is skewed to low complexity. Residues E271–S317 form a disordered region. 3 [DE]-W-[ST] repeats span residues D288–S290, D297–S299, and D315–S317.

The protein belongs to the universal ribosomal protein uS2 family. As to quaternary structure, monomer (37LRP) and homodimer (67LR). Component of the small ribosomal subunit. Mature ribosomes consist of a small (40S) and a large (60S) subunit. The 40S subunit contains about 33 different proteins and 1 molecule of RNA (18S). The 60S subunit contains about 49 different proteins and 3 molecules of RNA (28S, 5.8S and 5S). Interacts with rps21. Interacts with several laminins including at least lamb1. Interacts with mdk. Acylated. Acylation may be a prerequisite for conversion of the monomeric 37 kDa laminin receptor precursor (37LRP) to the mature dimeric 67 kDa laminin receptor (67LR), and may provide a mechanism for membrane association. In terms of processing, cleaved by stromelysin-3 (ST3) at the cell surface. Cleavage by stromelysin-3 may be a mechanism to alter cell-extracellular matrix interactions.

It localises to the cell membrane. Its subcellular location is the cytoplasm. It is found in the nucleus. Its function is as follows. Required for the assembly and/or stability of the 40S ribosomal subunit. Required for the processing of the 20S rRNA-precursor to mature 18S rRNA in a late step of the maturation of 40S ribosomal subunits. Also functions as a cell surface receptor for laminin. Plays a role in cell adhesion to the basement membrane and in the consequent activation of signaling transduction pathways. May play a role in cell fate determination and tissue morphogenesis. The polypeptide is Small ribosomal subunit protein uS2 (rpsa) (Salmo salar (Atlantic salmon)).